The primary structure comprises 490 residues: Beta-N-acetyl-D-glucosaminide beta-1,4-N-acetylglucosaminyl-transferase (490 aa).

The Cytoplasmic portion of the chain corresponds to 1–30 (MYLVVCWGRVTGNMISTRHCFSRCKSRSVR). The helical; Signal-anchor for type II membrane protein transmembrane segment at 31–50 (VIKATAMLFVAAMLFLALHM) threads the bilayer. N-linked (GlcNAc...) asparagine glycans are attached at residues Asn-51, Asn-82, Asn-441, Asn-459, and Asn-485. Residues 51–490 (NFSHEASQQN…YLTGNFTIIS (440 aa)) are Lumenal-facing.

This sequence belongs to the glycosyltransferase 7 family.

It localises to the golgi apparatus membrane. It carries out the reaction an N-acetyl-beta-D-glucosaminyl derivative + UDP-N-acetyl-alpha-D-glucosamine = an N-acetyl-beta-D-glucosaminyl-(1-&gt;4)-N-acetyl-beta-D-glucosaminyl derivative + UDP + H(+). The protein operates within protein modification; protein glycosylation. The sequence is that of Beta-N-acetyl-D-glucosaminide beta-1,4-N-acetylglucosaminyl-transferase (GNT) from Lymnaea stagnalis (Great pond snail).